A 156-amino-acid chain; its full sequence is D-aminoacyl-tRNA deacylase (156 aa).

Residues 142 to 143 carry the Gly-cisPro motif, important for rejection of L-amino acids motif; it reads GP.

The protein belongs to the DTD family. As to quaternary structure, homodimer.

It is found in the cytoplasm. It carries out the reaction glycyl-tRNA(Ala) + H2O = tRNA(Ala) + glycine + H(+). The enzyme catalyses a D-aminoacyl-tRNA + H2O = a tRNA + a D-alpha-amino acid + H(+). An aminoacyl-tRNA editing enzyme that deacylates mischarged D-aminoacyl-tRNAs. Also deacylates mischarged glycyl-tRNA(Ala), protecting cells against glycine mischarging by AlaRS. Acts via tRNA-based rather than protein-based catalysis; rejects L-amino acids rather than detecting D-amino acids in the active site. By recycling D-aminoacyl-tRNA to D-amino acids and free tRNA molecules, this enzyme counteracts the toxicity associated with the formation of D-aminoacyl-tRNA entities in vivo and helps enforce protein L-homochirality. The protein is D-aminoacyl-tRNA deacylase of Cupriavidus metallidurans (strain ATCC 43123 / DSM 2839 / NBRC 102507 / CH34) (Ralstonia metallidurans).